Reading from the N-terminus, the 455-residue chain is Phosphoglucosamine mutase (455 aa).

Catalysis depends on S102, which acts as the Phosphoserine intermediate. 4 residues coordinate Mg(2+): S102, D241, D243, and D245. S102 carries the post-translational modification Phosphoserine.

The protein belongs to the phosphohexose mutase family. The cofactor is Mg(2+). Activated by phosphorylation.

The catalysed reaction is alpha-D-glucosamine 1-phosphate = D-glucosamine 6-phosphate. In terms of biological role, catalyzes the conversion of glucosamine-6-phosphate to glucosamine-1-phosphate. The polypeptide is Phosphoglucosamine mutase (Legionella pneumophila (strain Paris)).